The primary structure comprises 188 residues: Capsid protein (188 aa).

This sequence belongs to the tymoviruses capsid protein family.

The protein resides in the virion. Functionally, self-assembles to form a T=3 icosahedral capsid composed of 180 copies of the capsid protein. The capsid encapsulates the single-stranded RNA genome. The sequence is that of Capsid protein from Theobroma cacao (Cacao).